The sequence spans 291 residues: Verruculogen synthase (291 aa).

The active site involves Tyr-68.

This sequence belongs to the PhyH family. In terms of assembly, homodimer. The cofactor is Fe cation.

The enzyme catalyses fumitremorgin B + 2-oxoglutarate + AH2 + 2 O2 = verruculogen + succinate + A + CO2 + H2O. It functions in the pathway mycotoxin biosynthesis. Verruculogen synthase; part of the gene cluster that mediates the biosynthesis of fumitremorgins, indole alkaloids that carry not only intriguing chemical structures, but also interesting biological and pharmacological activities. The biosynthesis of fumitremorgin-type alkaloids begins by condensation of the two amino acids L-tryptophan and L-proline to brevianamide F, catalyzed by the non-ribosomal peptide synthetase ftmA. Brevianamide F is then prenylated by the prenyltransferase ftmPT1/ftmB in the presence of dimethylallyl diphosphate, resulting in the formation of tryprostatin B. The three cytochrome P450 monooxygenases, ftmP450-1/ftmC, ftmP450-2/ftmE and ftmP450-3/FtmG, are responsible for the conversion of tryprostatin B to 6-hydroxytryprostatin B, tryprostatin A to fumitremorgin C and fumitremorgin C to 12,13-dihydroxyfumitremorgin C, respectively. The putative methyltransferase ftmMT/ftmD is expected for the conversion of 6-hydroxytryprostatin B to tryprostatin A. FtmPT2/FtmH catalyzes the prenylation of 12,13-dihydroxyfumitre-morgin C in the presence of dimethylallyl diphosphate, resulting in the formation of fumitremorgin B. Fumitremorgin B is further converted to verruculogen by ftmOx1/ftmF via the insertion of an endoperoxide bond between the two prenyl moieties. In some fungal species, verruculogen is further converted to fumitremorgin A, but the enzymes involved in this step have not been identified yet. In Aspergillus fumigatus (strain ATCC MYA-4609 / CBS 101355 / FGSC A1100 / Af293) (Neosartorya fumigata), this protein is Verruculogen synthase.